A 301-amino-acid polypeptide reads, in one-letter code: Protoheme IX farnesyltransferase 1 (301 aa).

Helical transmembrane passes span 29-49 (VVALMLLTVLVGMCLAVPHAV), 51-71 (VQPLLAGMLGIAMMAGSAAAL), 101-121 (ALIFAASLGSLGFIVLYSLVN), 123-143 (LTAWLTFASLIGYALVYTAYL), 150-170 (NIVIGGLAGAMPPLLGWTAVT), 177-197 (ALLLVIIIFTWTPPHFWALAI), 223-243 (CILLYTVLLAIACLLPVLVGM), 244-264 (CGPVYFVCSSLLSTGFIYKAW), and 275-295 (AMQVFRFSIYHLMLLFMALLL).

This sequence belongs to the UbiA prenyltransferase family. Protoheme IX farnesyltransferase subfamily.

It is found in the cell inner membrane. It carries out the reaction heme b + (2E,6E)-farnesyl diphosphate + H2O = Fe(II)-heme o + diphosphate. It participates in porphyrin-containing compound metabolism; heme O biosynthesis; heme O from protoheme: step 1/1. Functionally, converts heme B (protoheme IX) to heme O by substitution of the vinyl group on carbon 2 of heme B porphyrin ring with a hydroxyethyl farnesyl side group. This is Protoheme IX farnesyltransferase 1 from Shewanella baltica (strain OS185).